The primary structure comprises 283 residues: Thymidylate synthase (283 aa).

Arg-22 lines the dUMP pocket. Cys-160 serves as the catalytic Nucleophile. DUMP contacts are provided by residues 180–183 (RSCD), Asn-191, and 221–223 (HIY). Position 183 (Asp-183) interacts with (6R)-5,10-methylene-5,6,7,8-tetrahydrofolate. Ser-282 serves as a coordination point for (6R)-5,10-methylene-5,6,7,8-tetrahydrofolate.

This sequence belongs to the thymidylate synthase family. Bacterial-type ThyA subfamily. As to quaternary structure, homodimer.

Its subcellular location is the cytoplasm. The catalysed reaction is dUMP + (6R)-5,10-methylene-5,6,7,8-tetrahydrofolate = 7,8-dihydrofolate + dTMP. Its pathway is pyrimidine metabolism; dTTP biosynthesis. In terms of biological role, catalyzes the reductive methylation of 2'-deoxyuridine-5'-monophosphate (dUMP) to 2'-deoxythymidine-5'-monophosphate (dTMP) while utilizing 5,10-methylenetetrahydrofolate (mTHF) as the methyl donor and reductant in the reaction, yielding dihydrofolate (DHF) as a by-product. This enzymatic reaction provides an intracellular de novo source of dTMP, an essential precursor for DNA biosynthesis. The protein is Thymidylate synthase of Shewanella halifaxensis (strain HAW-EB4).